We begin with the raw amino-acid sequence, 406 residues long: Sorting nexin-6 (406 aa).

An N-acetylmethionine modification is found at M1. The residue at position 2 (M2) is an N-acetylmethionine; in Sorting nexin-6, N-terminally processed. The interval 2-179 (MEGLDDGPDF…NQDLSVRGKN (178 aa)) is interaction with PIM1. The PX domain maps to 26–173 (LQSDAALQVD…HVFLEYNQDL (148 aa)). A 1,2-diacyl-sn-glycero-3-phospho-(1D-myo-inositol-4,5-bisphosphate) contacts are provided by residues 41–47 (SERDKVK), 100–106 (FDASREK), and 114–117 (EGSM). A phosphoserine mark is found at S116 and S194. The interval 182–199 (EKLEDFFKNMVKSADGVI) is membrane-binding amphipathic helix. The region spanning 203 to 406 (VKDVDDFFEH…NCLAVLNGDT (204 aa)) is the BAR domain.

It belongs to the sorting nexin family. In terms of assembly, forms heterodimers with BAR domain-containing sorting nexins SNX1 and SNX2. The heterodimers are proposed to self-assemble into helical arrays on the membrane to stabilize and expand local membrane curvature underlying endosomal tubule formation. Thought to be a component of the originally described retromer complex (also called SNX-BAR retromer) which is a pentamer containing the heterotrimeric retromer cargo-selective complex (CSC), also described as vacuolar protein sorting subcomplex (VPS), and a heterodimeric membrane-deforming subcomplex formed between SNX1 or SNX2 and SNX5 or SNX6 (also called SNX-BAR subcomplex); the respective CSC and SNX-BAR subcomplexes associate with low affinity. Interacts with SNX1, SNX2, VPS26A, VPS29, VPS35, CDKN1B, TGFB receptors, BACE1, BRMS1, PIP5K1C isoform 3. Interacts with DCTN1; the association with DCTN1 is involved in movement of retromer-c ontaining vesicles toward the TGN. Interacts with CDKN1B and GIT1. Interacts with PIM1; translocating SNX6 to the nucleus. In vitro phosphorylated by PIM1; not affecting PIM1-dependent nuclear translocation.

It is found in the early endosome. It localises to the early endosome membrane. The protein localises to the cytoplasmic vesicle. Its subcellular location is the cytoplasm. The protein resides in the nucleus. Involved in several stages of intracellular trafficking. Interacts with membranes phosphatidylinositol 3,4-bisphosphate and/or phosphatidylinositol 4,5-bisphosphate. Acts in part as component of the retromer membrane-deforming SNX-BAR subcomplex. The SNX-BAR retromer mediates retrograde transport of cargo proteins from endosomes to the trans-Golgi network (TGN) and is involved in endosome-to-plasma membrane transport for cargo protein recycling. The SNX-BAR subcomplex functions to deform the donor membrane into a tubular profile called endosome-to-TGN transport carrier (ETC). Does not have in vitro vesicle-to-membrane remodeling activity. Involved in retrograde endosome-to-TGN transport of lysosomal enzyme receptor IGF2R. May function as link between transport vesicles and dynactin. Negatively regulates retrograde transport of BACE1 from the cell surface to the trans-Golgi network. Involved in E-cadherin sorting and degradation; inhibits PIP5K1C isoform 3-mediated E-cadherin degradation. In association with GIT1 involved in EGFR degradation. Promotes lysosomal degradation of CDKN1B. May contribute to transcription regulation. The chain is Sorting nexin-6 (SNX6) from Homo sapiens (Human).